A 513-amino-acid polypeptide reads, in one-letter code: ATP synthase subunit alpha (513 aa).

ATP is bound at residue 169–176 (GDRQTGKT).

Belongs to the ATPase alpha/beta chains family. In terms of assembly, F-type ATPases have 2 components, CF(1) - the catalytic core - and CF(0) - the membrane proton channel. CF(1) has five subunits: alpha(3), beta(3), gamma(1), delta(1), epsilon(1). CF(0) has three main subunits: a(1), b(2) and c(9-12). The alpha and beta chains form an alternating ring which encloses part of the gamma chain. CF(1) is attached to CF(0) by a central stalk formed by the gamma and epsilon chains, while a peripheral stalk is formed by the delta and b chains.

The protein resides in the cell inner membrane. The enzyme catalyses ATP + H2O + 4 H(+)(in) = ADP + phosphate + 5 H(+)(out). Its function is as follows. Produces ATP from ADP in the presence of a proton gradient across the membrane. The alpha chain is a regulatory subunit. This Pasteurella multocida (strain Pm70) protein is ATP synthase subunit alpha.